Consider the following 101-residue polypeptide: Small ribosomal subunit protein uS14 (101 aa).

Positions 1 to 23 are disordered; it reads MAKKSSVEKNKRRRKMVAQQAPK.

The protein belongs to the universal ribosomal protein uS14 family. Part of the 30S ribosomal subunit. Contacts proteins S3 and S10.

Its function is as follows. Binds 16S rRNA, required for the assembly of 30S particles and may also be responsible for determining the conformation of the 16S rRNA at the A site. The polypeptide is Small ribosomal subunit protein uS14 (Rhodospirillum centenum (strain ATCC 51521 / SW)).